We begin with the raw amino-acid sequence, 357 residues long: Protein Wnt-9b (357 aa).

A signal peptide spans 1–22; that stretch reads MRPPPALALAGLCLLALPAAAA. 11 cysteine pairs are disulfide-bonded: Cys89–Cys100, Cys135–Cys143, Cys145–Cys162, Cys210–Cys224, Cys212–Cys219, Cys291–Cys316, Cys305–Cys311, Cys315–Cys355, Cys331–Cys346, Cys333–Cys343, and Cys338–Cys339. An N-linked (GlcNAc...) asparagine glycan is attached at Asn99. The O-palmitoleoyl serine; by PORCN moiety is linked to residue Ser216.

It belongs to the Wnt family. As to quaternary structure, forms a soluble 1:1 complex with AFM; this prevents oligomerization and is required for prolonged biological activity. The complex with AFM may represent the physiological form in body fluids. Component of the Wnt-Fzd-LRP5-LRP6 signaling complex that contains a WNT protein, a FZD protein and LRP5 or LRP6. Interacts directly in the complex with LRP6. Interacts with PKD1 (via extracellular domain). Palmitoleoylation is required for efficient binding to frizzled receptors. Depalmitoleoylation leads to Wnt signaling pathway inhibition. In terms of tissue distribution, moderately expressed in fetal kidney and adult kidney. Also found in brain.

It localises to the secreted. Its subcellular location is the extracellular space. The protein localises to the extracellular matrix. In terms of biological role, ligand for members of the frizzled family of seven transmembrane receptors. Functions in the canonical Wnt/beta-catenin signaling pathway. Required for normal embryonic kidney development, and for normal development of the urogenital tract, including uterus and part of the oviduct and the upper vagina in females, and epididymis and vas deferens in males. Activates a signaling cascade in the metanephric mesenchyme that induces tubulogenesis. Acts upstream of WNT4 in the signaling pathways that mediate development of kidney tubules and the Muellerian ducts. Plays a role in cranofacial development and is required for normal fusion of the palate during embryonic development. The protein is Protein Wnt-9b (WNT9B) of Homo sapiens (Human).